A 150-amino-acid chain; its full sequence is Putative pre-16S rRNA nuclease (150 aa).

The protein belongs to the YqgF nuclease family.

It localises to the cytoplasm. Could be a nuclease involved in processing of the 5'-end of pre-16S rRNA. This Syntrophus aciditrophicus (strain SB) protein is Putative pre-16S rRNA nuclease.